The following is a 157-amino-acid chain: Small ribosomal subunit protein uS7 (157 aa).

The protein belongs to the universal ribosomal protein uS7 family. In terms of assembly, part of the 30S ribosomal subunit. Contacts proteins S9 and S11.

In terms of biological role, one of the primary rRNA binding proteins, it binds directly to 16S rRNA where it nucleates assembly of the head domain of the 30S subunit. Is located at the subunit interface close to the decoding center, probably blocks exit of the E-site tRNA. This chain is Small ribosomal subunit protein uS7, found in Francisella tularensis subsp. tularensis (strain FSC 198).